The primary structure comprises 46 residues: Endochitinase 3 (46 aa).

Residues 1 to 21 are disordered; sequence MTPQGNKPSSHDVITGRWTPS.

It belongs to the glycosyl hydrolase 19 family. Chitinase class I subfamily.

The enzyme catalyses Random endo-hydrolysis of N-acetyl-beta-D-glucosaminide (1-&gt;4)-beta-linkages in chitin and chitodextrins.. In terms of biological role, defense against chitin-containing fungal and bacterial pathogens. The protein is Endochitinase 3 of Arachis hypogaea (Peanut).